A 72-amino-acid polypeptide reads, in one-letter code: Large ribosomal subunit protein uL29 (72 aa).

This sequence belongs to the universal ribosomal protein uL29 family.

This is Large ribosomal subunit protein uL29 from Thermus thermophilus (strain ATCC BAA-163 / DSM 7039 / HB27).